Here is an 80-residue protein sequence, read N- to C-terminus: MSGLGIMVLTLLLLVSMATSHQDGGGKQATQRDAINVRRRRSITRRVVTEACEEYCEDRDKKTCCGLENGEPFCATLCFG.

The N-terminal stretch at methionine 1–serine 20 is a signal peptide. Positions histidine 21–threonine 44 are excised as a propeptide. Disulfide bonds link cysteine 52–cysteine 65, cysteine 56–cysteine 74, and cysteine 64–cysteine 78. Phenylalanine amide is present on phenylalanine 79.

The protein belongs to the conotoxin O3 superfamily. Expressed by the venom duct.

Its subcellular location is the secreted. The chain is Conotoxin VnMSGL-0121 from Conus ventricosus (Mediterranean cone).